The primary structure comprises 279 residues: Shikimate dehydrogenase (NADP(+)) (279 aa).

Residues Ser-18 to Ser-20 and Thr-64 contribute to the shikimate site. Lys-68 (proton acceptor) is an active-site residue. Residue Glu-80 coordinates NADP(+). 2 residues coordinate shikimate: Asn-89 and Asp-104. Residues Gly-129 to Ala-133, Asn-153 to Arg-158, and Ile-218 each bind NADP(+). Tyr-220 contributes to the shikimate binding site. Gly-241 serves as a coordination point for NADP(+).

It belongs to the shikimate dehydrogenase family. Homodimer.

The enzyme catalyses shikimate + NADP(+) = 3-dehydroshikimate + NADPH + H(+). Its pathway is metabolic intermediate biosynthesis; chorismate biosynthesis; chorismate from D-erythrose 4-phosphate and phosphoenolpyruvate: step 4/7. Functionally, involved in the biosynthesis of the chorismate, which leads to the biosynthesis of aromatic amino acids. Catalyzes the reversible NADPH linked reduction of 3-dehydroshikimate (DHSA) to yield shikimate (SA). The polypeptide is Shikimate dehydrogenase (NADP(+)) (Chelativorans sp. (strain BNC1)).